The sequence spans 388 residues: Spermidine/putrescine import ATP-binding protein PotA (388 aa).

Positions isoleucine 17–isoleucine 247 constitute an ABC transporter domain. Glycine 49–threonine 56 is a binding site for ATP.

It belongs to the ABC transporter superfamily. Spermidine/putrescine importer (TC 3.A.1.11.1) family. The complex is composed of two ATP-binding proteins (PotA), two transmembrane proteins (PotB and PotC) and a solute-binding protein (PotD).

Its subcellular location is the cell membrane. It catalyses the reaction ATP + H2O + polyamine-[polyamine-binding protein]Side 1 = ADP + phosphate + polyamineSide 2 + [polyamine-binding protein]Side 1.. Functionally, part of the ABC transporter complex PotABCD involved in spermidine/putrescine import. Responsible for energy coupling to the transport system. This is Spermidine/putrescine import ATP-binding protein PotA from Mycobacterium sp. (strain KMS).